The following is a 933-amino-acid chain: Potassium voltage-gated channel subfamily KQT member 5 (933 aa).

The Cytoplasmic segment spans residues 1 to 126 (MPRHHAGGEE…YNVLERPRGW (126 aa)). Position 89 is a phosphoserine (serine 89). The chain crosses the membrane as a helical span at residues 127–147 (AFVYHAFVFLLVFGCLILSVF). Residues 148-157 (STIPEHTKLA) are Extracellular-facing. The helical transmembrane segment at 158–178 (SSCLLILEFVMIVVFGLEFII) threads the bilayer. Over 179–201 (RIWSAGCCCRYRGWQGRLRFARK) the chain is Cytoplasmic. A helical membrane pass occupies residues 202–222 (PFCVIDTIVLIASIAVVSAKT). Residues 223-230 (QGNIFATS) are Extracellular-facing. The chain crosses the membrane as a helical; Voltage-sensor span at residues 231–253 (ALRSLRFLQILRMVRMDRRGGTW). A 1,2-diacyl-sn-glycero-3-phospho-(1D-myo-inositol-4,5-bisphosphate)-binding residues include arginine 249 and lysine 265. Residues 254 to 267 (KLLGSVVYAHSKEL) are Cytoplasmic-facing. A helical membrane pass occupies residues 268-288 (ITAWYIGFLVLIFSSFLVYLV). The Extracellular portion of the chain corresponds to 289–299 (EKDANKEFSTY). Positions 300-320 (ADALWWGTITLTTIGYGDKTP) form an intramembrane region, pore-forming. Topologically, residues 321-326 (LTWLGR) are extracellular. The chain crosses the membrane as a helical span at residues 327–347 (LLSAGFALLGISFFALPAGIL). The Cytoplasmic segment spans residues 348–933 (GSGFALKVQE…ALSLPHVKLN (586 aa)). Lysine 362 contributes to the a 1,2-diacyl-sn-glycero-3-phospho-(1D-myo-inositol-4,5-bisphosphate) binding site. The tract at residues 371–379 (AANLIQCVW) is interaction with CALM. The segment at 405-465 (SPTKKEQGEA…EGSPTKVQKS (61 aa)) is disordered. Over residues 432 to 441 (RGQSIKSRQA) the composition is skewed to polar residues. A Phosphoserine modification is found at serine 448. The interval 522–529 (VIRAIRIM) is interaction with CALM. Residues 578-598 (KGQMTSDKKSREKITAEHETT) are disordered. Over residues 583–598 (SDKKSREKITAEHETT) the composition is skewed to basic and acidic residues. Serine 832 is subject to Phosphoserine. The tract at residues 878 to 933 (GAEETETDTFDGTPPPAGEAAFSSDSLRTGRSRSSQNICKTGDSTDALSLPHVKLN) is disordered. Positions 900-924 (SSDSLRTGRSRSSQNICKTGDSTDA) are enriched in polar residues.

Belongs to the potassium channel family. KQT (TC 1.A.1.15) subfamily. Kv7.5/KCNQ5 sub-subfamily. As to quaternary structure, homotetramer; forms a functional homotetrameric channel resulting in the expression of a small M-current. Heterotetramer with KCNQ3; forms heterotetrameric M-channel responsible for the native M-current. Heterotetramer with KCNQ1; forms a functional voltage-gated potassium channel. Interacts (via C-terminus) with calmodulin/CALM; forms a heterooctameric structure (with 4:4 KCNQ1:CALM stoichiometry); the interaction is calcium-independent, constitutive and participates in the channel function. Strongly expressed in brain. Also expressed in colon, lung and uterus.

The protein localises to the cell membrane. It catalyses the reaction K(+)(in) = K(+)(out). Phosphatidylinositol-4,5-bisphosphate (PIP2) is essential to activate KCNQ5 channel by inducing the coupling of the voltage-sensing domain (VSD) and the pore-forming domain (PD). Calcium suppresses KCNQ5 channel current through calcium-bound CALM C-terminus. Therefore CALM acts as calcium sensor that controls channel activity. Zinc potentiates channel activity in a pH-dependent manner. The activity is modulated by small changes in cell volume. Activated by the anticonvulsant retigabine. Inhibited by linopirdine and XE991. In terms of biological role, pore-forming subunit of the voltage-gated potassium (Kv) channel broadly expressed in brain and skeletal muscle and involved in the regulation of neuronal excitability. Associates with KCNQ3/Kv7.3 pore-forming subunit to form a potassium channel which contributes to M-type current, a slowly activating and deactivating potassium conductance which plays a critical role in determining the subthreshold electrical excitability of neurons. Contributes, with other potassium channels, to the molecular diversity of a heterogeneous population of M-channels, varying in kinetic and pharmacological properties, which underlie this physiologically important current. Also forms a functional channel with KCNQ1/Kv7.1 subunit that may contribute to vasoconstriction and hypertension. Channel may be selectively permeable in vitro to other cations besides potassium, in decreasing order of affinity K(+) = Rb(+) &gt; Cs(+) &gt; Na(+). This Mus musculus (Mouse) protein is Potassium voltage-gated channel subfamily KQT member 5.